The sequence spans 473 residues: UDP-N-acetylmuramate--L-alanine ligase (473 aa).

An ATP-binding site is contributed by 114-120 (GTHGKTT).

This sequence belongs to the MurCDEF family.

It localises to the cytoplasm. The enzyme catalyses UDP-N-acetyl-alpha-D-muramate + L-alanine + ATP = UDP-N-acetyl-alpha-D-muramoyl-L-alanine + ADP + phosphate + H(+). Its pathway is cell wall biogenesis; peptidoglycan biosynthesis. Cell wall formation. The polypeptide is UDP-N-acetylmuramate--L-alanine ligase (Chlorobium luteolum (strain DSM 273 / BCRC 81028 / 2530) (Pelodictyon luteolum)).